We begin with the raw amino-acid sequence, 375 residues long: Chaperone protein DnaJ (375 aa).

Residues 5 to 70 (DFYEVLGVEK…QKRAQYDQFG (66 aa)) form the J domain. Residues 134–216 (GVEKEVSITK…CKGKGTVRKQ (83 aa)) form a CR-type zinc finger. Residues C147, C150, C164, C167, C190, C193, C204, and C207 each contribute to the Zn(2+) site. CXXCXGXG motif repeat units follow at residues 147-154 (CETCTGTG), 164-171 (CPKCNGSG), 190-197 (CDMCGGKG), and 204-211 (CSDCKGKG).

This sequence belongs to the DnaJ family. In terms of assembly, homodimer. It depends on Zn(2+) as a cofactor.

It is found in the cytoplasm. In terms of biological role, participates actively in the response to hyperosmotic and heat shock by preventing the aggregation of stress-denatured proteins and by disaggregating proteins, also in an autonomous, DnaK-independent fashion. Unfolded proteins bind initially to DnaJ; upon interaction with the DnaJ-bound protein, DnaK hydrolyzes its bound ATP, resulting in the formation of a stable complex. GrpE releases ADP from DnaK; ATP binding to DnaK triggers the release of the substrate protein, thus completing the reaction cycle. Several rounds of ATP-dependent interactions between DnaJ, DnaK and GrpE are required for fully efficient folding. Also involved, together with DnaK and GrpE, in the DNA replication of plasmids through activation of initiation proteins. The sequence is that of Chaperone protein DnaJ from Clostridium tetani (strain Massachusetts / E88).